Here is a 569-residue protein sequence, read N- to C-terminus: ABC1 family protein MCP2 (569 aa).

The N-terminal 18 residues, 1–18 (MMTKAFFNKLPFEVFRRY), are a transit peptide targeting the mitochondrion. The Mitochondrial matrix segment spans residues 19 to 34 (VRTGKSIPQRSPRTRK). The helical transmembrane segment at 35–51 (SLLVGGTIASAVVLYNF) threads the bilayer. Residues 52–569 (NDTFHDSVKH…KFIPKTWLSS (518 aa)) lie on the Mitochondrial intermembrane side of the membrane.

The protein belongs to the protein kinase superfamily. ADCK protein kinase family.

It localises to the mitochondrion. Its subcellular location is the mitochondrion inner membrane. Functionally, component of MIOREX complexes, large expressome-like assemblies of ribosomes with factors involved in all the steps of post-transcriptional gene expression. Involved in mitochondrial lipid homeostasis. The protein is ABC1 family protein MCP2 of Saccharomyces cerevisiae (strain ATCC 204508 / S288c) (Baker's yeast).